The chain runs to 209 residues: GTP-binding nuclear protein Ran1B (209 aa).

Residues 1–162 (NFKLVIVGDG…LYLARKLAGD (162 aa)) enclose the Small GTPase Ran-type domain. GTP is bound at residue 9–16 (DGGTGKTT). Residues 28 to 36 (KKYEPTIGV) form a switch-I region. Residues Gly-59, 113–116 (NKVD), and 141–143 (SAK) each bind GTP. Residues 59–75 (GQEKFGGLRDGYYIHGQ) form a switch-II region. Residues 187-200 (QHEAELAAAASQPL) are compositionally biased toward low complexity. The disordered stretch occupies residues 187 to 209 (QHEAELAAAASQPLPDDDDDAFD).

Belongs to the small GTPase superfamily. Ran family. As to quaternary structure, found in a nuclear export complex with RanGTP, exportin and pre-miRNA.

It is found in the nucleus. Its function is as follows. GTP-binding protein involved in nucleocytoplasmic transport. Required for the import of protein into the nucleus and also for RNA export. Involved in chromatin condensation and control of cell cycle. The chain is GTP-binding nuclear protein Ran1B (RAN1B) from Lotus japonicus (Lotus corniculatus var. japonicus).